We begin with the raw amino-acid sequence, 265 residues long: MKIGVDAGGTLIKIVQEKNGERTYSTRLTTEIEEVIQWLNQQDCNNINLTGGQAAMINEQLNCESRVFVEFDAAAKGLEILLEEQGHFLDDYIFTNVGTGTSLHFSNGKAQKRVGGIGTGGGMIQGLGYLLTGISNYKQLTDTAQNGNRDIIDLKVKHIYKDSEPPISGDLTAANFGNVLHHLDESFTDADKLASVIAVVGEVITTMSITVAREHNTKNVAYIGSSFHNNDLLKDVVKDYTVLRGCEPYYIEHGAFSGALGSIHL.

6 to 13 serves as a coordination point for ATP; the sequence is DAGGTLIK. Glutamate 70 functions as the Proton acceptor in the catalytic mechanism. ATP-binding positions include threonine 99, 121–125, tyrosine 137, and serine 225; that span reads GGMIQ.

The protein belongs to the type II pantothenate kinase family. Homodimer.

It is found in the cytoplasm. The catalysed reaction is (R)-pantothenate + ATP = (R)-4'-phosphopantothenate + ADP + H(+). It functions in the pathway cofactor biosynthesis; coenzyme A biosynthesis; CoA from (R)-pantothenate: step 1/5. Catalyzes the phosphorylation of pantothenate (Pan), the first step in CoA biosynthesis. The sequence is that of Type II pantothenate kinase from Staphylococcus saprophyticus subsp. saprophyticus (strain ATCC 15305 / DSM 20229 / NCIMB 8711 / NCTC 7292 / S-41).